Consider the following 188-residue polypeptide: Photosystem I assembly protein Ycf4 (188 aa).

A run of 2 helical transmembrane segments spans residues phenylalanine 26 to phenylalanine 48 and phenylalanine 63 to tryptophan 85.

Belongs to the Ycf4 family.

The protein resides in the cellular thylakoid membrane. Its function is as follows. Seems to be required for the assembly of the photosystem I complex. This Synechocystis sp. (strain ATCC 27184 / PCC 6803 / Kazusa) protein is Photosystem I assembly protein Ycf4.